A 274-amino-acid polypeptide reads, in one-letter code: Penicillin-insensitive murein endopeptidase (274 aa).

The first 19 residues, 1 to 19 (MKKTALALLALLVSSASLA), serve as a signal peptide directing secretion. Disulfide bonds link cysteine 44–cysteine 265, cysteine 187–cysteine 235, and cysteine 216–cysteine 223. Zn(2+)-binding residues include histidine 110, histidine 113, aspartate 120, aspartate 147, histidine 150, and histidine 211. A disordered region spans residues 225-274 (DQPLPPPGDGCGAELQSWFEPPEPGTTKPEKKTPPPLPPSCQALLDEHVL).

It belongs to the peptidase M74 family. As to quaternary structure, dimer. Requires Zn(2+) as cofactor.

It localises to the periplasm. Functionally, murein endopeptidase that cleaves the D-alanyl-meso-2,6-diamino-pimelyl amide bond that connects peptidoglycan strands. Likely plays a role in the removal of murein from the sacculus. The chain is Penicillin-insensitive murein endopeptidase from Citrobacter koseri (strain ATCC BAA-895 / CDC 4225-83 / SGSC4696).